Here is a 485-residue protein sequence, read N- to C-terminus: Programmed cell death protein 7 (485 aa).

A disordered region spans residues 1–133; that stretch reads MALPPFFGQG…EAPPPPADVL (133 aa). Residues 12-48 show a composition bias toward pro residues; the sequence is PGPPPPQPPPPAPFGCPPPPLPSPAFPPPLPQRPGPF. Over residues 49–71 the composition is skewed to low complexity; sequence PGASAPFLQPPLALQPRASAEAS. 2 stretches are compositionally biased toward pro residues: residues 82–96 and 109–130; these read PVPP…PQCR and PPPP…PPPA. Coiled coils occupy residues 232-335 and 362-411; these read VGEA…AAAR and RSEL…ESKL.

Interacts with RBM40. Component of the U11/U12 snRNPs that are part of the U12-type spliceosome.

It localises to the nucleus. In terms of biological role, promotes apoptosis when overexpressed. The sequence is that of Programmed cell death protein 7 (PDCD7) from Homo sapiens (Human).